The following is a 589-amino-acid chain: ATP-dependent lipid A-core flippase (589 aa).

The next 5 membrane-spanning stretches (helical) occupy residues 29 to 49 (WLLV…STFL), 68 to 88 (ALWL…AGYI), 157 to 177 (VIGA…AILL), 254 to 274 (LSSA…LLIA), and 283 to 303 (LSPG…PALK). In terms of domain architecture, ABC transmembrane type-1 spans 32 to 314 (VVAACGALLE…LTNVQNMLQS (283 aa)). One can recognise an ABC transporter domain in the interval 346 to 582 (IEFRGITARY…DGLYAYLYSM (237 aa)). An ATP-binding site is contributed by 380–387 (GRSGSGKS).

This sequence belongs to the ABC transporter superfamily. Lipid exporter (TC 3.A.1.106) family. In terms of assembly, homodimer.

It is found in the cell inner membrane. The enzyme catalyses ATP + H2O + lipid A-core oligosaccharideSide 1 = ADP + phosphate + lipid A-core oligosaccharideSide 2.. In terms of biological role, involved in lipopolysaccharide (LPS) biosynthesis. Translocates lipid A-core from the inner to the outer leaflet of the inner membrane. Transmembrane domains (TMD) form a pore in the inner membrane and the ATP-binding domain (NBD) is responsible for energy generation. The chain is ATP-dependent lipid A-core flippase from Xylella fastidiosa (strain 9a5c).